Consider the following 451-residue polypeptide: DNA double-strand break repair nuclease NurA (451 aa).

Mn(2+) is bound by residues D51 and D126.

This sequence belongs to the NurA family. As to quaternary structure, homodimer. Interacts with HerA. It depends on Mn(2+) as a cofactor.

Exonuclease activity is stimulated in the presence of HerA. Functionally, involved in DNA double-strand break (DSB) repair. Probably acts with HerA to stimulate resection of the 5' strand and produce the long 3' single-strand that is required for RadA loading. Exhibits 5' endonuclease activity and both 5' and 3' exonuclease activities. In Pyrococcus furiosus (strain ATCC 43587 / DSM 3638 / JCM 8422 / Vc1), this protein is DNA double-strand break repair nuclease NurA.